A 201-amino-acid chain; its full sequence is UPF0301 protein MSMEG_6921/MSMEI_6732 (201 aa).

This sequence belongs to the UPF0301 (AlgH) family.

The sequence is that of UPF0301 protein MSMEG_6921/MSMEI_6732 from Mycolicibacterium smegmatis (strain ATCC 700084 / mc(2)155) (Mycobacterium smegmatis).